The chain runs to 143 residues: uncharacterized protein (143 aa).

The protein belongs to the OsmC/Ohr family.

This is an uncharacterized protein from Acinetobacter baylyi (strain ATCC 33305 / BD413 / ADP1).